Consider the following 351-residue polypeptide: Histidine protein kinase SaeS (351 aa).

The next 2 helical transmembrane spans lie at 9-29 (IIIGVVSSIPLTSTILAIAYI) and 40-60 (TLTLTTIITSCLTLLICSIFI). The region spanning 61 to 114 (NPLIQKIKQFNIKTKQFANGNYASNDKTFNSPKEIYELNQSFNKMASEITQQMN) is the HAMP domain. The region spanning 129-348 (NLAHDLKTPL…TMTVTLHKLD (220 aa)) is the Histidine kinase domain. Phosphohistidine; by autocatalysis is present on His132.

Post-translationally, autophosphorylated.

The protein resides in the cell membrane. The catalysed reaction is ATP + protein L-histidine = ADP + protein N-phospho-L-histidine.. Functionally, member of the two-component regulatory system SaeR/SaeS involved in the regulation of staphylococcal virulence factors in a strain-dependent fashion. Probably functions as a membrane-associated protein kinase that upon sensing the appropriate signal, autophosphorylates and in turn activates the cytosolic response regulator SaeR. SaeR/SaeS activates the expression of exoproteins involved in adhesion and invasion of host cells, including hemolysins (hla, hlb, hlgC), coa, DNase, spa and cell wall-associated proteins (emp, eap, fnbA, fnbB, efb). Represses the expression of type 5 capsular polysaccharide (cap operon). Also modulates the expression of several other genes. This Staphylococcus aureus (strain Newman) protein is Histidine protein kinase SaeS (saeS).